A 586-amino-acid polypeptide reads, in one-letter code: Major facilitator superfamily domain-containing protein 6-like (586 aa).

2 consecutive transmembrane segments (helical) span residues 50–70 (ILMGTKHLIATCWIPFCAFLA) and 78–98 (MFLTGSLLSSAGASLLMVLVP). The disordered stretch occupies residues 218-237 (GPVNLSKPQGDTQTPDHSSK). Over residues 223–237 (SKPQGDTQTPDHSSK) the composition is skewed to polar residues. A run of 9 helical transmembrane segments spans residues 240–260 (PWTFILSLGVVVFWELLAAPL), 284–304 (LWVWKLLGVSAGVCGIAALVG), 318–338 (VIYFYSYSLVSTLALAVSTAF), 365–385 (LILLAFTVFWIGATASTVQDF), 397–417 (ELVMGFSVALSLLGEILFHPF), 428–448 (VGVLGLGLGCLALQVLYYAFI), 454–474 (VLPVQILSTISSGALWWAVGA), 494–514 (GHFYGSGCSLGSFVGGFVVLH), and 519–538 (VLYEACCVVLLLWLALFLSI).

It belongs to the major facilitator superfamily. MFSD6 family.

The protein localises to the membrane. This Mus musculus (Mouse) protein is Major facilitator superfamily domain-containing protein 6-like (Mfsd6l).